Here is a 288-residue protein sequence, read N- to C-terminus: 4-diphosphocytidyl-2-C-methyl-D-erythritol kinase (288 aa).

Lys8 is an active-site residue. Residue 92-102 (PVAAGMAGGST) coordinates ATP. Residue Asp134 is part of the active site.

This sequence belongs to the GHMP kinase family. IspE subfamily.

It catalyses the reaction 4-CDP-2-C-methyl-D-erythritol + ATP = 4-CDP-2-C-methyl-D-erythritol 2-phosphate + ADP + H(+). It functions in the pathway isoprenoid biosynthesis; isopentenyl diphosphate biosynthesis via DXP pathway; isopentenyl diphosphate from 1-deoxy-D-xylulose 5-phosphate: step 3/6. Functionally, catalyzes the phosphorylation of the position 2 hydroxy group of 4-diphosphocytidyl-2C-methyl-D-erythritol. This is 4-diphosphocytidyl-2-C-methyl-D-erythritol kinase from Clostridium perfringens (strain SM101 / Type A).